Here is a 169-residue protein sequence, read N- to C-terminus: uncharacterized protein (169 aa).

The HD domain occupies 18-130 (VVEHCLAVSE…VAHADNLIFG (113 aa)).

This is an uncharacterized protein from Methanocaldococcus jannaschii (strain ATCC 43067 / DSM 2661 / JAL-1 / JCM 10045 / NBRC 100440) (Methanococcus jannaschii).